Consider the following 2017-residue polypeptide: Protein cbp-1 (2017 aa).

Residues 1-13 (MDEPPSKKSRADS) show a composition bias toward basic and acidic residues. Residues 1–182 (MDEPPSKKSR…PGMFQGDQQQ (182 aa)) form a disordered region. 2 stretches are compositionally biased toward low complexity: residues 21-30 (ALSALESLEA) and 78-90 (QPGQ…PPQN). Residues 106-116 (NPSQTSNNSPR) show a composition bias toward polar residues. The span at 141–151 (MMSPPSMGRVP) shows a compositional bias: low complexity. Residues 152-164 (GPSPGGPQPPGPG) are compositionally biased toward pro residues. Low complexity predominate over residues 165-182 (QPQMRPGQPGMFQGDQQQ). Arginine 234 bears the Symmetric dimethylarginine; by PRMT5; in vitro mark. A disordered region spans residues 307–398 (SNGQPIRGPN…PGSSMLATHQ (92 aa)). A compositionally biased stretch (low complexity) spans 340 to 379 (QAAAAQHAAQQQAAAQAQAQAAAQQQQQQQREQEAAAAAQ). Residues 399–505 (DPEKRKLIQQ…REDCPVCKPL (107 aa)) form a TAZ-type 1 zinc finger. 2 disordered regions span residues 558 to 593 (EGFN…DMPD) and 706 to 864 (GRSD…DTVF). Residues 559–573 (GFNGNPFQNGPNRGG) are compositionally biased toward low complexity. A KIX domain is found at 593 to 672 (DCTKEWHHQV…KIYKIQKELQ (80 aa)). The segment covering 721–773 (PSQQNQPWGGAPNSNMHQQIPPNGQVPQVNNSSTFPSSGNSTPNIGASSTVSA) has biased composition (polar residues). Over residues 834 to 854 (KDTKDGVAESKPKEQQAKREP) the composition is skewed to basic and acidic residues. The 107-residue stretch at 864–970 (FSQEDLIKFL…EMFVSEMDPV (107 aa)) folds into the Bromo domain. 2 interaction with histone regions span residues 902 to 948 (DYHE…YNRK) and 1224 to 1226 (YLD). Residues 1112 to 1492 (KYLASKLPHN…LAYSLHETDS (381 aa)) enclose the CBP/p300-type HAT domain. Acetyl-CoA is bound by residues 1225-1227 (LDS), 1237-1238 (RT), isoleucine 1284, arginine 1289, and tryptophan 1293. The span at 1349-1358 (NEEAQRKVKE) shows a compositional bias: basic and acidic residues. Residues 1349–1401 (NEEAQRKVKEDDDDGEDADGGLGGGDSGKKKSSKNKKNNLKKNAKMNKKKAGS) are disordered. Basic residues predominate over residues 1378–1399 (KKSSKNKKNNLKKNAKMNKKKA). The ZZ-type zinc finger occupies 1494–1540 (GMEYTCNKCSSPAVWHCQSCDDFDLCDGCKPTTQHPHEMEKIKSLIG). Residues cysteine 1499, cysteine 1502, cysteine 1510, cysteine 1513, cysteine 1519, cysteine 1522, histidine 1528, and histidine 1530 each contribute to the Zn(2+) site. The TAZ-type 2 zinc-finger motif lies at 1550 to 1631 (GGTRYESIQR…ACTVPFCMNI (82 aa)). Disordered stretches follow at residues 1656-1828 (GLQS…QPVR) and 1908-2017 (SQMS…AGGQ). Over residues 1667–1678 (TPSTVSNGTPSN) the composition is skewed to polar residues. Residues 1699–1708 (QVQMQQHQGS) are compositionally biased toward low complexity. Over residues 1748 to 1757 (PQMNANQSRY) the composition is skewed to polar residues. 2 stretches are compositionally biased toward low complexity: residues 1793-1812 (MNPQ…QNPG) and 1908-1932 (SQMS…QAGA). Polar residues predominate over residues 1943–1962 (QNNSQPRAPSGQFASMNPSM). A compositionally biased stretch (low complexity) spans 1963 to 2017 (QQQYPQQQQGWPQQRQQNPGGMQQNANPYNQFQNRQNMMMMPQQQQPHPSNAGGQ).

Interacts (via N-terminus domain and HAT domain) with prmt-5; the interaction results in methylation of cbp-1. Interacts (via HAT domain) with cep-1; cep-1 transcriptional activity may be inhibited by interaction with methylated cbp-1. Component of a complex that contains prmt-5 and cbp-1. In terms of processing, methylation by prmt-5 may repress the capacity of cbp-1 to enhance cep-1-dependent transcription of egl-1.

The protein resides in the nucleus. The catalysed reaction is L-lysyl-[protein] + acetyl-CoA = N(6)-acetyl-L-lysyl-[protein] + CoA + H(+). Functionally, acetyltransferase enzyme. Acetylates histones, giving a specific tag for transcriptional activation. May prevent DNA damage-induced apoptosis by inhibiting cep-1-dependent transcription activation of the programmed cell death activator egl-1. In differentiated cells, negatively regulates localization of heterochromatin to the nuclear periphery. Plays a role in migration of gonadal distal tip cells, where it probably modulates expression of genes involved in integrin-mediated adhesion. The chain is Protein cbp-1 (cbp-1) from Caenorhabditis elegans.